Consider the following 97-residue polypeptide: Bacterial microcompartment shell protein EutM (97 aa).

Positions 3-87 constitute a BMC domain; the sequence is ALGMIETRGL…PHGDLEEVFP (85 aa).

The protein belongs to the bacterial microcompartments protein family. As to quaternary structure, homohexamer with a central pore of up to 8.6 Angstroms diameter. The hexamers pack into a two-dimensional array. Interacts with EutQ.

It is found in the bacterial microcompartment. Its pathway is amine and polyamine degradation; ethanolamine degradation. In terms of biological role, probably a major component of the bacterial microcompartment (BMC) shell dedicated to ethanolamine degradation. Each homohexamer has a central pore with an opening of up to 8.6 Angstroms. A positively-charged funnel leads to the pore from each side of the hexamer. The pore probably allows metabolite passage into and out of the BMC. This chain is Bacterial microcompartment shell protein EutM (eutM), found in Escherichia coli O6:H1 (strain CFT073 / ATCC 700928 / UPEC).